The primary structure comprises 356 residues: Methionine import ATP-binding protein MetN (356 aa).

Positions 7 to 250 (IKLDNIDVTF…PRESLTQDFI (244 aa)) constitute an ABC transporter domain. 43 to 50 (GYSGAGKS) is a binding site for ATP.

The protein belongs to the ABC transporter superfamily. Methionine importer (TC 3.A.1.24) family. The complex is composed of two ATP-binding proteins (MetN), two transmembrane proteins (MetI) and a solute-binding protein (MetQ).

It is found in the cell membrane. It carries out the reaction L-methionine(out) + ATP + H2O = L-methionine(in) + ADP + phosphate + H(+). The catalysed reaction is D-methionine(out) + ATP + H2O = D-methionine(in) + ADP + phosphate + H(+). Functionally, part of the ABC transporter complex MetNIQ involved in methionine import. Responsible for energy coupling to the transport system. The polypeptide is Methionine import ATP-binding protein MetN (Streptococcus agalactiae serotype Ia (strain ATCC 27591 / A909 / CDC SS700)).